Consider the following 102-residue polypeptide: Small ribosomal subunit protein uS10 (102 aa).

Belongs to the universal ribosomal protein uS10 family. Part of the 30S ribosomal subunit.

In terms of biological role, involved in the binding of tRNA to the ribosomes. This is Small ribosomal subunit protein uS10 from Acidiphilium cryptum (strain JF-5).